We begin with the raw amino-acid sequence, 183 residues long: Holliday junction branch migration complex subunit RuvA (183 aa).

The segment at 1–63 (MTVGLIGVVE…EDAHLLYGFL (63 aa)) is domain I. The tract at residues 64-141 (EESEKILFER…IQDETKPVHN (78 aa)) is domain II. Position 141 (asparagine 141) is a region of interest, flexible linker. Residues 141-183 (NEAFLALESLGFKSAEINPILKKLKPNLSVEEAIKEALQQLRS) are domain III.

The protein belongs to the RuvA family. Homotetramer. Forms an RuvA(8)-RuvB(12)-Holliday junction (HJ) complex. HJ DNA is sandwiched between 2 RuvA tetramers; dsDNA enters through RuvA and exits via RuvB. An RuvB hexamer assembles on each DNA strand where it exits the tetramer. Each RuvB hexamer is contacted by two RuvA subunits (via domain III) on 2 adjacent RuvB subunits; this complex drives branch migration. In the full resolvosome a probable DNA-RuvA(4)-RuvB(12)-RuvC(2) complex forms which resolves the HJ.

It localises to the cytoplasm. The RuvA-RuvB-RuvC complex processes Holliday junction (HJ) DNA during genetic recombination and DNA repair, while the RuvA-RuvB complex plays an important role in the rescue of blocked DNA replication forks via replication fork reversal (RFR). RuvA specifically binds to HJ cruciform DNA, conferring on it an open structure. The RuvB hexamer acts as an ATP-dependent pump, pulling dsDNA into and through the RuvAB complex. HJ branch migration allows RuvC to scan DNA until it finds its consensus sequence, where it cleaves and resolves the cruciform DNA. The polypeptide is Holliday junction branch migration complex subunit RuvA (Helicobacter acinonychis (strain Sheeba)).